The following is a 408-amino-acid chain: Peptidase T (408 aa).

Positions 1 to 28 (MKNQLIDRLTRYTTIDTQSDPKSTTTPS) are disordered. Over residues 11 to 28 (RYTTIDTQSDPKSTTTPS) the composition is skewed to polar residues. Residue histidine 78 coordinates Zn(2+). Aspartate 80 is a catalytic residue. Aspartate 140 is a binding site for Zn(2+). Glutamate 174 serves as the catalytic Proton acceptor. Glutamate 175, aspartate 197, and histidine 379 together coordinate Zn(2+).

The protein belongs to the peptidase M20B family. Requires Zn(2+) as cofactor.

It is found in the cytoplasm. The enzyme catalyses Release of the N-terminal residue from a tripeptide.. In terms of biological role, cleaves the N-terminal amino acid of tripeptides. This is Peptidase T from Staphylococcus aureus (strain USA300 / TCH1516).